Here is a 370-residue protein sequence, read N- to C-terminus: F-box protein At3g20690 (370 aa).

One can recognise an F-box domain in the interval 1–45; the sequence is MMMSDLPHDLVEEILSRLPLISLKAMRSTCKTWNVLSKHRSFANK.

This Arabidopsis thaliana (Mouse-ear cress) protein is F-box protein At3g20690.